The primary structure comprises 100 residues: Chorion class A protein M2774 (100 aa).

The segment at Gly-1–Gly-33 is left arm. Positions Ser-34–Ile-81 are central domain. A right arm region spans residues Cys-82–Tyr-100.

The protein belongs to the chorion protein family.

In terms of biological role, this protein is one of many from the eggshell of the silk moth. This Bombyx mori (Silk moth) protein is Chorion class A protein M2774.